A 455-amino-acid polypeptide reads, in one-letter code: Ribosomal protein uS12 methylthiotransferase RimO (455 aa).

Residues 21-131 (GKVGFISLGC…VVGAVHQYVP (111 aa)) enclose the MTTase N-terminal domain. The [4Fe-4S] cluster site is built by Cys-30, Cys-66, Cys-95, Cys-164, Cys-168, and Cys-171. The region spanning 150–387 (LTPRHYAYLK…MAKQAEISAA (238 aa)) is the Radical SAM core domain. Positions 390 to 455 (QAKIGRTIDV…DEHDLWARLI (66 aa)) constitute a TRAM domain.

It belongs to the methylthiotransferase family. RimO subfamily. [4Fe-4S] cluster serves as cofactor.

It is found in the cytoplasm. The enzyme catalyses L-aspartate(89)-[ribosomal protein uS12]-hydrogen + (sulfur carrier)-SH + AH2 + 2 S-adenosyl-L-methionine = 3-methylsulfanyl-L-aspartate(89)-[ribosomal protein uS12]-hydrogen + (sulfur carrier)-H + 5'-deoxyadenosine + L-methionine + A + S-adenosyl-L-homocysteine + 2 H(+). Catalyzes the methylthiolation of an aspartic acid residue of ribosomal protein uS12. In Marinobacter nauticus (strain ATCC 700491 / DSM 11845 / VT8) (Marinobacter aquaeolei), this protein is Ribosomal protein uS12 methylthiotransferase RimO.